A 257-amino-acid chain; its full sequence is MLVLLSCAKTMSAVSKVKVPLTTSPRFQKEAAEIALQMSQFSVDELERLLRVNAKIAVENYKRYQAFHAETTPELPALLAYTGIVFKRLNPKDFSAEDFGYAQEHLRLTSFCYGLLRPLDVIRAYRLEGDVVLPELGNQTLFSYWRSRLTDTFIEDIRSAGGILCNLASDEMKSLFDWKRVESEVRVVTPEFHVWKNGKLATIVVYTKMSRGEMTRFILKNKIGTPEELKGFSWEGFEFDESLSDERKLVFINGMGE.

Belongs to the UPF0246 family.

The chain is UPF0246 protein BT_3869 from Bacteroides thetaiotaomicron (strain ATCC 29148 / DSM 2079 / JCM 5827 / CCUG 10774 / NCTC 10582 / VPI-5482 / E50).